Here is a 252-residue protein sequence, read N- to C-terminus: 3-deoxy-manno-octulosonate cytidylyltransferase (252 aa).

It belongs to the KdsB family.

The protein resides in the cytoplasm. The catalysed reaction is 3-deoxy-alpha-D-manno-oct-2-ulosonate + CTP = CMP-3-deoxy-beta-D-manno-octulosonate + diphosphate. It functions in the pathway nucleotide-sugar biosynthesis; CMP-3-deoxy-D-manno-octulosonate biosynthesis; CMP-3-deoxy-D-manno-octulosonate from 3-deoxy-D-manno-octulosonate and CTP: step 1/1. Its pathway is bacterial outer membrane biogenesis; lipopolysaccharide biosynthesis. Its function is as follows. Activates KDO (a required 8-carbon sugar) for incorporation into bacterial lipopolysaccharide in Gram-negative bacteria. This Vibrio cholerae serotype O1 (strain ATCC 39315 / El Tor Inaba N16961) protein is 3-deoxy-manno-octulosonate cytidylyltransferase.